The primary structure comprises 258 residues: Regulatory protein RecX (258 aa).

The protein belongs to the RecX family.

The protein localises to the cytoplasm. Functionally, modulates RecA activity. This Streptococcus sanguinis (strain SK36) protein is Regulatory protein RecX.